We begin with the raw amino-acid sequence, 337 residues long: Large ribosomal subunit protein uL10 (337 aa).

A disordered region spans residues 309-337 (EEVVEEQEEVKEEEEEESDMASGLGALFG). A compositionally biased stretch (acidic residues) spans 310–327 (EVVEEQEEVKEEEEEESD).

Belongs to the universal ribosomal protein uL10 family. In terms of assembly, part of the 50S ribosomal subunit. Forms part of the ribosomal stalk which helps the ribosome interact with GTP-bound translation factors. Forms a heptameric L10(L12)2(L12)2(L12)2 complex, where L10 forms an elongated spine to which the L12 dimers bind in a sequential fashion.

Functionally, forms part of the ribosomal stalk, playing a central role in the interaction of the ribosome with GTP-bound translation factors. The protein is Large ribosomal subunit protein uL10 of Methanococcoides burtonii (strain DSM 6242 / NBRC 107633 / OCM 468 / ACE-M).